The chain runs to 629 residues: Filament-like plant protein 2 (629 aa).

Coiled-coil stretches lie at residues 34–61 and 102–171; these read WEKA…LEDR and NTGL…LEAE. The disordered stretch occupies residues 186–205; the sequence is SSNQSVDSHSDGGRERVEGS. Residues 193 to 203 are compositionally biased toward basic and acidic residues; that stretch reads SHSDGGRERVE. Residues 270-493 are a coiled coil; it reads ELSLMEKLEK…IEEKTMIKRE (224 aa).

The protein belongs to the FPP family. In terms of assembly, interacts with WPP/MAF proteins. Binds to COG2; this interaction promotes the association between cortical microtubules and EXO70A1. As to expression, accumulates in preferentially xylem cells.

It localises to the vesicle. Functionally, ensures, when in complex with FPP3/VETH1 and COG2, the correct secondary cell wall (SCW) deposition pattern by recruiting exocyst components to cortical microtubules in xylem cells during secondary cell wall deposition by recruiting EXO70A1. The protein is Filament-like plant protein 2 of Arabidopsis thaliana (Mouse-ear cress).